We begin with the raw amino-acid sequence, 266 residues long: Apolipoprotein A-I (266 aa).

The first 18 residues, 1 to 18 (MKAVVLTLAVLFLTGSQA), serve as a signal peptide directing secretion. Repeat copies occupy residues 67–88 (LKLL…EQIG) and 89–110 (PVTQ…QEMN). A 10 X approximate tandem repeats region spans residues 67-266 (LKLLDNWDSL…DEATKKLNSQ (200 aa)). A Methionine sulfoxide modification is found at M109. The stretch at 111–121 (KDLEEVKKKVQ) is one 3; half-length repeat. Repeat copies occupy residues 122 to 143 (PYLD…QKVA), 144 to 165 (PLGA…EKLS), 166 to 187 (PLGE…AQLA), 188 to 209 (PYGE…EGGG), and 210 to 231 (AALT…EKAK). Residues 232 to 242 (PALEDLRQGLL) form a 9; half-length repeat. Residues 243–266 (PVLENFRVSLLAAVDEATKKLNSQ) form repeat 10.

The protein belongs to the apolipoprotein A1/A4/E family. Homodimer. Interacts with APOA1BP and CLU. Component of a sperm activating protein complex (SPAP), consisting of APOA1, an immunoglobulin heavy chain, an immunoglobulin light chain and albumin. Interacts with NDRG1. Interacts with SCGB3A2. Interacts with NAXE and YJEFN3. Glycosylated. Post-translationally, palmitoylated. In terms of processing, phosphorylation sites are present in the extracellular medium.

It is found in the secreted. In terms of biological role, participates in the reverse transport of cholesterol from tissues to the liver for excretion by promoting cholesterol efflux from tissues and by acting as a cofactor for the lecithin cholesterol acyltransferase (LCAT). As part of the SPAP complex, activates spermatozoa motility. The chain is Apolipoprotein A-I (APOA1) from Leptonychotes weddellii (Weddell seal).